We begin with the raw amino-acid sequence, 438 residues long: Enolase (438 aa).

The substrate site is built by His159 and Glu168. The Proton donor role is filled by Glu211. Residues Asp246, Glu297, and Asp322 each contribute to the Mg(2+) site. Glu297 and Asp322 together coordinate substrate. The active-site Proton acceptor is the Lys347. Substrate contacts are provided by residues 374 to 377 (SHRS) and Lys398.

The protein belongs to the enolase family. As to quaternary structure, homodimer. The cofactor is Mg(2+).

Its subcellular location is the cytoplasm. The enzyme catalyses (2R)-2-phosphoglycerate = phosphoenolpyruvate + H2O. It functions in the pathway carbohydrate degradation; glycolysis; pyruvate from D-glyceraldehyde 3-phosphate: step 4/5. The polypeptide is Enolase (ENO1) (Cryphonectria parasitica (Chestnut blight fungus)).